Reading from the N-terminus, the 334-residue chain is L-lactate dehydrogenase B chain (334 aa).

Ala2 is subject to N-acetylalanine. N6-acetyllysine is present on Lys7. Residues Ser11 and Ser44 each carry the phosphoserine modification. NAD(+) is bound by residues 30–58 and Arg100; that span reads GQVG…LEDK. Lys58 carries the N6-acetyllysine modification. Arg107 provides a ligand contact to substrate. Lys119 carries the N6-acetyllysine modification. NAD(+) is bound at residue Asn139. Substrate is bound by residues Asn139 and Arg170. The active-site Proton acceptor is the His194. Phosphotyrosine is present on Tyr240. A substrate-binding site is contributed by Thr249. Lys329 carries the post-translational modification N6-acetyllysine.

The protein belongs to the LDH/MDH superfamily. LDH family. In terms of assembly, homotetramer. Interacts with PTEN upstream reading frame protein MP31; the interaction leads to inhibition of mitochondrial lactate dehydrogenase activity, preventing conversion of lactate to pyruvate in mitochondria.

It is found in the cytoplasm. The protein resides in the mitochondrion inner membrane. It carries out the reaction (S)-lactate + NAD(+) = pyruvate + NADH + H(+). Its pathway is fermentation; pyruvate fermentation to lactate; (S)-lactate from pyruvate: step 1/1. Functionally, interconverts simultaneously and stereospecifically pyruvate and lactate with concomitant interconversion of NADH and NAD(+). This Mus musculus (Mouse) protein is L-lactate dehydrogenase B chain (Ldhb).